The primary structure comprises 558 residues: Transcription termination factor MTEF18, mitochondrial (558 aa).

The N-terminal 58 residues, 1–58 (MFMVRLKFASISHNFSTVAAKHRRVPSKYKSLAIGKAQQAITDYLHTTRSLSYTHAEQ), are a transit peptide targeting the mitochondrion.

The protein belongs to the mTERF family.

The protein localises to the mitochondrion. Transcription termination factor involved in the regulation of mitochondrial-encoded gene expression. Essential for normal plant growth and development. The protein is Transcription termination factor MTEF18, mitochondrial of Arabidopsis thaliana (Mouse-ear cress).